Reading from the N-terminus, the 312-residue chain is Methionyl-tRNA formyltransferase (312 aa).

112–115 lines the (6S)-5,6,7,8-tetrahydrofolate pocket; the sequence is SLLP.

This sequence belongs to the Fmt family.

The enzyme catalyses L-methionyl-tRNA(fMet) + (6R)-10-formyltetrahydrofolate = N-formyl-L-methionyl-tRNA(fMet) + (6S)-5,6,7,8-tetrahydrofolate + H(+). Attaches a formyl group to the free amino group of methionyl-tRNA(fMet). The formyl group appears to play a dual role in the initiator identity of N-formylmethionyl-tRNA by promoting its recognition by IF2 and preventing the misappropriation of this tRNA by the elongation apparatus. This Dehalococcoides mccartyi (strain CBDB1) protein is Methionyl-tRNA formyltransferase.